The primary structure comprises 1300 residues: Serine protease EspP (1300 aa).

Positions 1 to 55 (MNKIYSLKYSHITGGLIAVSELSGRVSSRATGKKKHKRILALCFLGLLQSSYSFA) are cleaved as a signal peptide. A Peptidase S6 domain is found at 57 to 311 (QMDISNFYIR…NQTTIDNLKN (255 aa)). Catalysis depends on charge relay system residues histidine 127, aspartate 156, and serine 263. Residues 1034–1300 (DINGEAGAWA…AVNANFRYSF (267 aa)) form the Autotransporter domain.

In terms of processing, cleaved to release the mature protein from the outer membrane.

The protein localises to the periplasm. The protein resides in the secreted. It localises to the cell surface. Its subcellular location is the cell outer membrane. With respect to regulation, inhibition of cytotoxic activity by phenylmethylsulfonyl fluoride. Serine protease capable of cleaving pepsin A and human coagulation factor V, which may contribute to the mucosal hemorrhage observed in hemorrhagic colitis. The polypeptide is Serine protease EspP (espP) (Escherichia coli O157:H7).